The primary structure comprises 2498 residues: Nuclear receptor corepressor 1 (2498 aa).

4 disordered regions span residues 1 to 38, 54 to 84, 134 to 169, and 198 to 223; these read MSSS…QQEY, IQQQ…SGYD, SEVK…SKLS, and QQQL…VEQK. Basic and acidic residues-rich tracts occupy residues 71 to 82, 134 to 148, and 204 to 213; these read PVSDRPQDRRSG, SEVK…KHES, and EAAKPPEPEK. The tract at residues 154–304 is interaction with tbl1xr1-A; that stretch reads SGQPGDDQDA…REQNICQRYD (151 aa). The stretch at 168-208 forms a coiled coil; it reads LSKEELIQSMDRVDREIAKVEQQILKLKKKQQQLEEEAAKP. The SANT 1 domain occupies 427-478; the sequence is QFMNVWTDHEKEIFKEKFVRHPKNFGLIASYLERKNVSDCVLYYYLTKKNEN. The segment covering 483 to 493 has biased composition (basic residues); sequence VRRNYPKRRGR. 7 disordered regions span residues 483–649, 668–912, 1075–1122, 1417–1436, 1470–1583, 1737–1851, and 1916–1990; these read VRRN…GSKS, NLLQ…FGSR, SLSD…GTPG, DLVS…IMEG, SWGV…QRES, PGTQ…AQES, and PQME…TAHT. Composition is skewed to basic and acidic residues over residues 502 to 525 and 535 to 548; these read SQEE…KEDE and KEEL…KIDA. Residues 502 to 552 adopt a coiled-coil conformation; it reads SQEEKEIEKVEEEKADRNDKKEDERREEEEKEEKEELREGAKDKIDAVAED. A compositionally biased stretch (low complexity) spans 582–611; sequence ASEAAAANAVTTATTAPVTTTSTATTVAPV. Over residues 612-627 the composition is skewed to pro residues; the sequence is PVAPPPEEPTPPPPPQ. The SANT 2 domain maps to 628-665; that stretch reads EQSLVDHGRNWGAIAKMVGSKSESQCKNFYFNYKRRHN. The segment covering 689–699 has biased composition (polar residues); it reads QCDSIASTVSA. The segment covering 700 to 719 has biased composition (acidic residues); it reads QEDDENEASNEEENPEDSEG. 2 stretches are compositionally biased toward low complexity: residues 727–738 and 761–774; these read ESAPSPSPAEAA and DAAS…SPSP. The segment covering 854 to 863 has biased composition (basic and acidic residues); it reads MERLMDRAEA. 2 stretches are compositionally biased toward polar residues: residues 872–891 and 1102–1122; these read QNIS…SATC and ATSS…GTPG. Basic and acidic residues predominate over residues 1484–1501; sequence KMGERSKHEDTKSSDAIR. Positions 1505 to 1516 are enriched in polar residues; the sequence is TSVVSSGPSVLR. Over residues 1545–1558 the composition is skewed to low complexity; that stretch reads PSPMSRSSPMARSA. The stretch at 1765–1804 forms a coiled coil; the sequence is VSAERERERERERERDREREKEQRERESDRERERDRLAHA. The segment covering 1767-1802 has biased composition (basic and acidic residues); the sequence is AERERERERERERDREREKEQRERESDRERERDRLA. Composition is skewed to low complexity over residues 1803–1813 and 1820–1835; these read HAAAAAAAASA and RPVS…RPSS. Residues 1842–1851 show a composition bias toward polar residues; it reads PSPSVRAQES. Residues 1921-1942 are compositionally biased toward basic and acidic residues; it reads AKPKESKNDSARSEENLSRRNA. Residues 1958-1980 show a composition bias toward low complexity; it reads SPYTSSSFSSSKSQSQPSSAVYS. Positions 2012-2016 match the CORNR box 1 motif; sequence IDVII. Residues 2022–2109 form a disordered region; the sequence is SDKDGRERNS…SPPQQTIPGH (88 aa). A compositionally biased stretch (low complexity) spans 2031–2040; sequence SQSSDASSSH. The span at 2043–2052 shows a compositional bias: basic and acidic residues; the sequence is HRYEAPRETI. The segment covering 2093–2106 has biased composition (polar residues); the sequence is RYRQQQESPPQQTI. Residues 2123 to 2127 carry the CORNR box 2 motif; sequence ICHII. The span at 2136 to 2145 shows a compositional bias: low complexity; sequence PVNQPLQQPP. A disordered region spans residues 2136–2222; sequence PVNQPLQQPP…PISPPQAPML (87 aa). Residues 2146–2175 are compositionally biased toward polar residues; the sequence is ASTFQSTNPTSTAVRTKASSRFSPESQVQP. Positions 2190 to 2209 are enriched in basic and acidic residues; that stretch reads IPDKPRGRPGKSPDRGHISE. The short motif at 2326-2330 is the CORNR box 3 element; the sequence is LEDII. Disordered regions lie at residues 2344–2446 and 2464–2498; these read DHGV…YNPL and TSMT…DSDE. Polar residues predominate over residues 2353–2362; that stretch reads QGNQSGTPNS. A compositionally biased stretch (basic residues) spans 2380-2394; the sequence is HKQKLISKYGSRKTK. Composition is skewed to polar residues over residues 2464–2476 and 2489–2498; these read TSMT…QQSR and QYETLSDSDE.

This sequence belongs to the N-CoR nuclear receptor corepressors family. As to quaternary structure, forms a large corepressor complex that contains sin3a/b, histone deacetylases hdac1 and hdac2, rbbp4 and possibly rbbp7. Interacts with the thyroid receptor (TR, composed of rxra and thrb) and the retinoid acid receptor (RAR, composed of rxra and rara) in the absence of ligand. Interacts with tbl1xr1-A and possibly tbl1xr1-B. Interacts with zbtb33/kaiso.

The protein resides in the nucleus. Its function is as follows. Mediates transcriptional repression by certain nuclear receptors. Participates in complexes which promote histone deacetylation and the formation of repressive chromatin structures which may impede access by the basal transcription machinery. In association with hdac3, may play a role in the regulation of the circadian clock. The polypeptide is Nuclear receptor corepressor 1 (ncor1) (Xenopus laevis (African clawed frog)).